A 209-amino-acid chain; its full sequence is Nucleoside triphosphate pyrophosphatase (209 aa).

Asp74 acts as the Proton acceptor in catalysis.

Belongs to the Maf family. The cofactor is a divalent metal cation.

The protein localises to the cytoplasm. The enzyme catalyses a ribonucleoside 5'-triphosphate + H2O = a ribonucleoside 5'-phosphate + diphosphate + H(+). It carries out the reaction a 2'-deoxyribonucleoside 5'-triphosphate + H2O = a 2'-deoxyribonucleoside 5'-phosphate + diphosphate + H(+). Functionally, nucleoside triphosphate pyrophosphatase. May have a dual role in cell division arrest and in preventing the incorporation of modified nucleotides into cellular nucleic acids. The chain is Nucleoside triphosphate pyrophosphatase from Neorickettsia sennetsu (strain ATCC VR-367 / Miyayama) (Ehrlichia sennetsu).